Here is a 255-residue protein sequence, read N- to C-terminus: MGKFEQKERERISTFSFPTTGSQSSTSIKSLGSPLYGRFSSLSSTESQFDSSKQPHEYEKSFYFEESQGEALFNKLKTYSFPGDKDGVKTRRNSSICPRKPNAVSPLRVESNELSSHSHSRSLSHELTKPSGRRKSYHRKSHAISFSRSCKPNFIDGYDSNSSIGVNSRKTSLASSFLDKEYHSSPDTSYTHQMSPKNTIMNTNEQLRRNASGRFGSLKEFAEKNQINIEGKIFAHKVETGDILQPLIDLDIDNK.

A compositionally biased stretch (basic and acidic residues) spans 1-12 (MGKFEQKERERI). Disordered stretches follow at residues 1–32 (MGKF…KSLG) and 82–142 (PGDK…RKSH). The segment covering 13–30 (STFSFPTTGSQSSTSIKS) has biased composition (polar residues). Residues 131-142 (SGRRKSYHRKSH) are compositionally biased toward basic residues. At S217 the chain carries Phosphoserine.

This is Increased copper sensitivity protein 2 (ICS2) from Saccharomyces cerevisiae (strain ATCC 204508 / S288c) (Baker's yeast).